The chain runs to 253 residues: MGTILDKIVEQKKKEVAELYETYTPVKTKRKTHSLVEALQQFTVIAEVKRASPSKGDINLHVDVRKQVGTYEDCGAGAVSVLTDGQFFKGSFHDLQTAREESNIPLLCKDFIIDKIQIDRAYETGADIILLIVAALTKEKLKELYSYVLEKGLEAIVEVHDEQELETAIQLNPHVIGINNRNLKTFEVDLSQTEKLGKRLNEEKLLWISESGIHSKEDITRVKRAGAKGVLVGEALMTSSSISSFFEDCKVNI.

This sequence belongs to the TrpC family.

It catalyses the reaction 1-(2-carboxyphenylamino)-1-deoxy-D-ribulose 5-phosphate + H(+) = (1S,2R)-1-C-(indol-3-yl)glycerol 3-phosphate + CO2 + H2O. It participates in amino-acid biosynthesis; L-tryptophan biosynthesis; L-tryptophan from chorismate: step 4/5. The protein is Indole-3-glycerol phosphate synthase of Bacillus cereus (strain G9842).